Here is a 101-residue protein sequence, read N- to C-terminus: Protein RnfH (101 aa).

Belongs to the UPF0125 (RnfH) family.

This Coxiella burnetii (strain CbuK_Q154) (Coxiella burnetii (strain Q154)) protein is Protein RnfH.